A 466-amino-acid chain; its full sequence is Ribulose bisphosphate carboxylase large chain (466 aa).

Lysine 5 bears the N6,N6,N6-trimethyllysine mark. Residues asparagine 114 and threonine 164 each coordinate substrate. The Proton acceptor role is filled by lysine 166. Lysine 168 is a binding site for substrate. Mg(2+) is bound by residues lysine 192, aspartate 194, and glutamate 195. The residue at position 192 (lysine 192) is an N6-carboxylysine. The active-site Proton acceptor is histidine 285. Substrate contacts are provided by arginine 286, histidine 318, and serine 370.

It belongs to the RuBisCO large chain family. Type I subfamily. As to quaternary structure, heterohexadecamer of 8 large chains and 8 small chains; disulfide-linked. The disulfide link is formed within the large subunit homodimers. The cofactor is Mg(2+). Post-translationally, the disulfide bond which can form in the large chain dimeric partners within the hexadecamer appears to be associated with oxidative stress and protein turnover.

Its subcellular location is the plastid. The protein localises to the chloroplast. The catalysed reaction is 2 (2R)-3-phosphoglycerate + 2 H(+) = D-ribulose 1,5-bisphosphate + CO2 + H2O. The enzyme catalyses D-ribulose 1,5-bisphosphate + O2 = 2-phosphoglycolate + (2R)-3-phosphoglycerate + 2 H(+). RuBisCO catalyzes two reactions: the carboxylation of D-ribulose 1,5-bisphosphate, the primary event in carbon dioxide fixation, as well as the oxidative fragmentation of the pentose substrate in the photorespiration process. Both reactions occur simultaneously and in competition at the same active site. This is Ribulose bisphosphate carboxylase large chain from Aesculus pavia (Red buckeye).